A 215-amino-acid chain; its full sequence is N-(5'-phosphoribosyl)anthranilate isomerase (215 aa).

The protein belongs to the TrpF family.

It catalyses the reaction N-(5-phospho-beta-D-ribosyl)anthranilate = 1-(2-carboxyphenylamino)-1-deoxy-D-ribulose 5-phosphate. It participates in amino-acid biosynthesis; L-tryptophan biosynthesis; L-tryptophan from chorismate: step 3/5. The sequence is that of N-(5'-phosphoribosyl)anthranilate isomerase from Rippkaea orientalis (strain PCC 8801 / RF-1) (Cyanothece sp. (strain PCC 8801)).